A 161-amino-acid chain; its full sequence is Probable chemoreceptor glutamine deamidase CheD (161 aa).

This sequence belongs to the CheD family.

The catalysed reaction is L-glutaminyl-[protein] + H2O = L-glutamyl-[protein] + NH4(+). Probably deamidates glutamine residues to glutamate on methyl-accepting chemotaxis receptors (MCPs), playing an important role in chemotaxis. The sequence is that of Probable chemoreceptor glutamine deamidase CheD from Trichlorobacter lovleyi (strain ATCC BAA-1151 / DSM 17278 / SZ) (Geobacter lovleyi).